A 523-amino-acid chain; its full sequence is 2-isopropylmalate synthase (523 aa).

A Pyruvate carboxyltransferase domain is found at 5-267 (VIIFDTTLRD…HTAINHQEIW (263 aa)). Mn(2+) contacts are provided by D14, H202, H204, and N238. The regulatory domain stretch occupies residues 392–523 (RLDYFSVQSG…QHNENNKETV (132 aa)).

This sequence belongs to the alpha-IPM synthase/homocitrate synthase family. LeuA type 1 subfamily. In terms of assembly, homodimer. Requires Mn(2+) as cofactor.

The protein resides in the cytoplasm. It carries out the reaction 3-methyl-2-oxobutanoate + acetyl-CoA + H2O = (2S)-2-isopropylmalate + CoA + H(+). Its pathway is amino-acid biosynthesis; L-leucine biosynthesis; L-leucine from 3-methyl-2-oxobutanoate: step 1/4. Catalyzes the condensation of the acetyl group of acetyl-CoA with 3-methyl-2-oxobutanoate (2-ketoisovalerate) to form 3-carboxy-3-hydroxy-4-methylpentanoate (2-isopropylmalate). The sequence is that of 2-isopropylmalate synthase from Escherichia coli (strain SMS-3-5 / SECEC).